We begin with the raw amino-acid sequence, 60 residues long: Large ribosomal subunit protein bL32 (60 aa).

This sequence belongs to the bacterial ribosomal protein bL32 family.

The protein is Large ribosomal subunit protein bL32 of Ruminiclostridium cellulolyticum (strain ATCC 35319 / DSM 5812 / JCM 6584 / H10) (Clostridium cellulolyticum).